The following is a 341-amino-acid chain: Methionine import ATP-binding protein MetN 1 (341 aa).

The ABC transporter domain maps to 2–241 (IEFRQVSKSF…PKTTIAQNFV (240 aa)). Residue 38 to 45 (GYSGAGKS) participates in ATP binding.

It belongs to the ABC transporter superfamily. Methionine importer (TC 3.A.1.24) family. In terms of assembly, the complex is composed of two ATP-binding proteins (MetN), two transmembrane proteins (MetI) and a solute-binding protein (MetQ).

It localises to the cell membrane. The enzyme catalyses L-methionine(out) + ATP + H2O = L-methionine(in) + ADP + phosphate + H(+). It catalyses the reaction D-methionine(out) + ATP + H2O = D-methionine(in) + ADP + phosphate + H(+). Part of the ABC transporter complex MetNIQ involved in methionine import. Responsible for energy coupling to the transport system. This is Methionine import ATP-binding protein MetN 1 from Staphylococcus aureus (strain MRSA252).